A 1234-amino-acid chain; its full sequence is ATP-dependent helicase/nuclease subunit A (1234 aa).

Positions 2-475 constitute a UvrD-like helicase ATP-binding domain; sequence TQFTTSQQAA…IILAENFRST (474 aa). 23–30 lines the ATP pocket; it reads ASAGSGKT. The UvrD-like helicase C-terminal domain maps to 507–806; it reads YGALDYGDAH…KLMTIHKSKG (300 aa).

Belongs to the helicase family. AddA subfamily. As to quaternary structure, heterodimer of AddA and AddB/RexB. Requires Mg(2+) as cofactor.

It carries out the reaction Couples ATP hydrolysis with the unwinding of duplex DNA by translocating in the 3'-5' direction.. The catalysed reaction is ATP + H2O = ADP + phosphate + H(+). In terms of biological role, the heterodimer acts as both an ATP-dependent DNA helicase and an ATP-dependent, dual-direction single-stranded exonuclease. Recognizes the chi site generating a DNA molecule suitable for the initiation of homologous recombination. The AddA nuclease domain is required for chi fragment generation; this subunit has the helicase and 3' -&gt; 5' nuclease activities. This chain is ATP-dependent helicase/nuclease subunit A, found in Lacticaseibacillus paracasei (strain ATCC 334 / BCRC 17002 / CCUG 31169 / CIP 107868 / KCTC 3260 / NRRL B-441) (Lactobacillus paracasei).